The following is a 187-amino-acid chain: Ribonuclease M5 (187 aa).

The Toprim domain maps to 5–88 (KEVIVVEGKD…AFLPRKAGVP (84 aa)). The Mg(2+) site is built by E11, D57, and D59.

It belongs to the ribonuclease M5 family. It depends on Mg(2+) as a cofactor.

It is found in the cytoplasm. The enzyme catalyses Endonucleolytic cleavage of RNA, removing 21 and 42 nucleotides, respectively, from the 5'- and 3'-termini of a 5S-rRNA precursor.. Its function is as follows. Required for correct processing of both the 5' and 3' ends of 5S rRNA precursor. Cleaves both sides of a double-stranded region yielding mature 5S rRNA in one step. This is Ribonuclease M5 from Lactiplantibacillus plantarum (strain ATCC BAA-793 / NCIMB 8826 / WCFS1) (Lactobacillus plantarum).